Here is a 430-residue protein sequence, read N- to C-terminus: MHVSTLLVAVLLPLALSKPTPRKKTSSFKVHLARRGETEYYRDGPTDLQRAYAKYGIPTTHEMEGYHPQPISKLPGNSKATAGSGKEGVESQDEKGEVVNNPTDHDIQFLSPVTIGGQPFIMNFDTGSSDTWVMNTQMTDEEAKKDHHLYDPSKSKTASKLVDQNFDIKYGDKTHASGPVYSDVMDIGGATVRNQAIGLPSKVAASLAEDKTSDGLVGLAMTKLNTIRPVKQKTFFENLAEDLDEPVFTAQLRHGKMGSYEFGAIDKSKYHGDLIKVPVINENGFWEIPCSLYSVGKLDKIQTIQNGTGTAILDTGTTLLVLDEKIVKAYYAQVPGARYDPTRFAGWVYPCNSPMPSLFLAVGTDHMAIIPSSLLTFQSYGPGPDGVETCYGGLQSNNAGGIQILGDVFFKALFVVFDQRGPSISLAPHA.

Positions 1 to 17 are cleaved as a signal peptide; it reads MHVSTLLVAVLLPLALS. Residues 18–87 constitute a propeptide, activation peptide; sequence KPTPRKKTSS…SKATAGSGKE (70 aa). Residues 61–104 form a disordered region; that stretch reads HEMEGYHPQPISKLPGNSKATAGSGKEGVESQDEKGEVVNNPTD. Basic and acidic residues predominate over residues 87–104; that stretch reads EGVESQDEKGEVVNNPTD. The region spanning 109–427 is the Peptidase A1 domain; sequence FLSPVTIGGQ…DQRGPSISLA (319 aa). Residue Asp-125 is part of the active site. Asn-306 carries an N-linked (GlcNAc...) asparagine glycan. Asp-314 is an active-site residue.

The protein belongs to the peptidase A1 family.

The protein resides in the secreted. In terms of biological role, probable secreted aspartic-type endopeptidase which contributes to virulence. The polypeptide is Probable aspartic-type endopeptidase TRV_06366 (Trichophyton verrucosum (strain HKI 0517)).